The sequence spans 1648 residues: AT-rich interactive domain-containing protein arid-1 (1648 aa).

Disordered regions lie at residues 150–270 (ISEA…PVIN) and 284–307 (RKLEKQAMKREKQRLKEEEREEKL). Composition is skewed to acidic residues over residues 166 to 193 (DDDENDEEDQEDGENEEDADDDDDDTEE), 219 to 228 (TQSEESSADS), and 251 to 260 (SDEEDQEDLA). Polar residues predominate over residues 261–270 (TTDSENPVIN). The ARID domain occupies 655–745 (AETKDLFVAM…FLESYLAINT (91 aa)). 3 disordered regions span residues 763–935 (VLPG…KEDT), 1095–1563 (SEKR…KPHD), and 1628–1648 (KTASSAAAAQASSSTCSTPRP). The segment covering 848–860 (SDDVTDVPDDMTD) has biased composition (acidic residues). Basic and acidic residues-rich tracts occupy residues 861–878 (HEDLLPEAATRKKYERKS) and 925–935 (SEGRGPRKEDT). Composition is skewed to acidic residues over residues 1102-1112 (DDDESSDSDTD) and 1145-1154 (GDEEAEEEVK). A compositionally biased stretch (low complexity) spans 1165–1185 (QESPPTTSQGTTTPETAATGG). Residues 1195-1208 (YPPVPEELVPPPPV) are compositionally biased toward pro residues. Residues 1213 to 1251 (FPSTDRFSSGGSSNYPTLSRQGSINSMASPMFSPNSDLS) show a composition bias toward polar residues. Basic and acidic residues predominate over residues 1313–1326 (RASERSIDSASEHH). The span at 1348 to 1357 (ISTTQPTDTS) shows a compositional bias: polar residues. Low complexity predominate over residues 1377-1392 (ASPTLLTSGPLTLSSS). Over residues 1393–1404 (APPPPPASPAPP) the composition is skewed to pro residues. Low complexity-rich tracts occupy residues 1474 to 1486 (STTTTDTITPKSI) and 1531 to 1541 (TPTTMTTSTPT). Over residues 1542-1551 (RADSFQTQKN) the composition is skewed to polar residues.

The protein localises to the nucleus. In terms of biological role, DNA-binding protein which modulates activity of several transcription factors. Plays a role in the modulation of endoplasmic reticulum (ER) homeostasis during chemical and pathogen stress, including exposure to the Gram-negative bacterium P.aeruginosa. This Caenorhabditis elegans protein is AT-rich interactive domain-containing protein arid-1.